A 120-amino-acid polypeptide reads, in one-letter code: Dihydroneopterin aldolase (120 aa).

2 residues coordinate substrate: E20 and M114.

The protein belongs to the archaeal dihydroneopterin aldolase family. Homotetramer.

The enzyme catalyses 7,8-dihydroneopterin = 6-hydroxymethyl-7,8-dihydropterin + glycolaldehyde. Catalyzes the conversion of 7,8-dihydroneopterin (H2Neo) to 6-hydroxymethyl-7,8-dihydropterin (6-HMD). This chain is Dihydroneopterin aldolase, found in Picrophilus torridus (strain ATCC 700027 / DSM 9790 / JCM 10055 / NBRC 100828 / KAW 2/3).